Reading from the N-terminus, the 364-residue chain is Protein Wnt-16 (364 aa).

Residues 1–29 (MDRAALLALPSLCALWAAVLSLLPCGTQG) form the signal peptide. 3 cysteine pairs are disulfide-bonded: Cys81–Cys92, Cys138–Cys146, and Cys148–Cys167. N-linked (GlcNAc...) asparagine glycosylation is present at Asn142. Residue Asn188 is glycosylated (N-linked (GlcNAc...) asparagine). Disulfide bonds link Cys220/Cys234, Cys222/Cys229, Cys293/Cys324, Cys309/Cys319, Cys323/Cys363, Cys339/Cys354, Cys341/Cys351, and Cys346/Cys347. A lipid anchor (O-palmitoleoyl serine; by PORCN) is attached at Ser226. Residue Asn310 is glycosylated (N-linked (GlcNAc...) asparagine).

This sequence belongs to the Wnt family. In terms of processing, palmitoleoylation is required for efficient binding to frizzled receptors. Depalmitoleoylation leads to Wnt signaling pathway inhibition.

Its subcellular location is the secreted. It localises to the extracellular space. It is found in the extracellular matrix. Functionally, ligand for members of the frizzled family of seven transmembrane receptors. Probable developmental protein. May be a signaling molecule which affects the development of discrete regions of tissues. Is likely to signal over only few cell diameters. The chain is Protein Wnt-16 (Wnt16) from Mus musculus (Mouse).